The following is a 158-amino-acid chain: Small ribosomal subunit protein uS9 (158 aa).

Belongs to the universal ribosomal protein uS9 family.

This chain is Small ribosomal subunit protein uS9, found in Brucella anthropi (strain ATCC 49188 / DSM 6882 / CCUG 24695 / JCM 21032 / LMG 3331 / NBRC 15819 / NCTC 12168 / Alc 37) (Ochrobactrum anthropi).